Consider the following 248-residue polypeptide: E3 SUMO-protein ligase NSE2 (248 aa).

An N-acetylmethionine modification is found at methionine 1. Glycyl lysine isopeptide (Lys-Gly) (interchain with G-Cter in SUMO2) cross-links involve residues lysine 92 and lysine 109. Serine 118 is subject to Phosphoserine. Glycyl lysine isopeptide (Lys-Gly) (interchain with G-Cter in SUMO2) cross-links involve residues lysine 127 and lysine 132. An SP-RING-type zinc finger spans residues valine 156–lysine 242. Cysteine 187, histidine 189, cysteine 212, and cysteine 217 together coordinate Zn(2+).

This sequence belongs to the NSE2 family. In terms of assembly, component of the SMC5-SMC6 complex which consists at least of SMC5, SMC6, NSMCE2, NSMCE1, NSMCE4A or EID3 and NSMCE3. In terms of processing, sumoylated, possibly via autosumoylation.

The protein localises to the nucleus. It localises to the chromosome. The protein resides in the telomere. Its subcellular location is the PML body. It functions in the pathway protein modification; protein sumoylation. E3 SUMO-protein ligase component of the SMC5-SMC6 complex, a complex involved in DNA double-strand break repair by homologous recombination. Is not be required for the stability of the complex. The complex may promote sister chromatid homologous recombination by recruiting the SMC1-SMC3 cohesin complex to double-strand breaks. Acts as an E3 ligase mediating SUMO attachment to various proteins such as SMC6L1 and TSNAX, the shelterin complex subunits TERF1, TERF2, TINF2 and TERF2IP, RAD51AP1, and maybe the cohesin components RAD21 and STAG2. Required for recruitment of telomeres to PML nuclear bodies. Required for sister chromatid cohesion during prometaphase and mitotic progression. The sequence is that of E3 SUMO-protein ligase NSE2 (NSMCE2) from Bos taurus (Bovine).